The primary structure comprises 121 residues: Small ribosomal subunit protein uS13 (121 aa).

The tract at residues 92–121 is disordered; sequence RKGLPMRGQRTRTNARTRKGPRRAAQALKK.

Belongs to the universal ribosomal protein uS13 family. As to quaternary structure, part of the 30S ribosomal subunit. Forms a loose heterodimer with protein S19. Forms two bridges to the 50S subunit in the 70S ribosome.

Functionally, located at the top of the head of the 30S subunit, it contacts several helices of the 16S rRNA. In the 70S ribosome it contacts the 23S rRNA (bridge B1a) and protein L5 of the 50S subunit (bridge B1b), connecting the 2 subunits; these bridges are implicated in subunit movement. Contacts the tRNAs in the A and P-sites. This is Small ribosomal subunit protein uS13 from Burkholderia cenocepacia (strain HI2424).